The chain runs to 102 residues: Integration host factor subunit alpha (102 aa).

The tract at residues 49-71 (FGNFQLRTKPQRPGRNPKTGEEI) is disordered.

This sequence belongs to the bacterial histone-like protein family. Heterodimer of an alpha and a beta chain.

In terms of biological role, this protein is one of the two subunits of integration host factor, a specific DNA-binding protein that functions in genetic recombination as well as in transcriptional and translational control. The sequence is that of Integration host factor subunit alpha from Nitrosomonas eutropha (strain DSM 101675 / C91 / Nm57).